The sequence spans 429 residues: Glutamate-1-semialdehyde 2,1-aminomutase 2 (429 aa).

An N6-(pyridoxal phosphate)lysine modification is found at Lys-268.

The protein belongs to the class-III pyridoxal-phosphate-dependent aminotransferase family. HemL subfamily. As to quaternary structure, homodimer. The cofactor is pyridoxal 5'-phosphate.

It localises to the cytoplasm. The enzyme catalyses (S)-4-amino-5-oxopentanoate = 5-aminolevulinate. It functions in the pathway porphyrin-containing compound metabolism; protoporphyrin-IX biosynthesis; 5-aminolevulinate from L-glutamyl-tRNA(Glu): step 2/2. This Bacillus cereus (strain ATCC 10987 / NRS 248) protein is Glutamate-1-semialdehyde 2,1-aminomutase 2.